A 647-amino-acid polypeptide reads, in one-letter code: Protein INVOLVED IN DE NOVO 2 (647 aa).

Disordered regions lie at residues 1–20 (MGSTVILSSDDEDSDISESE) and 101–123 (SASEAEPSSKRQKNGNPIQDCDH). Over residues 9–20 (SDDEDSDISESE) the composition is skewed to acidic residues. The stretch at 253-508 (IAELTEEEAR…NIMKEWNTNI (256 aa)) forms a coiled coil.

As to quaternary structure, interacts with FMD1/IDNL1. Forms a complex with FMD1/IDNL1 and FMD2/INDL2. Can form homodimers. Interacts with MORC6.

Its function is as follows. Forms a complex with FDM1/IDNL1 and FDM2/IDNL2 that is required for RNA-directed DNA methylation (RdDM) and that functions at a downstream step of the RdDM pathway and downstream of small interfering RNA (siRNA) formation. Required for de novo DNA methylation, siRNA accumulation and siRNA-mediated maintenance methylation. Required for several post-transcriptional gene silencing pathways. Binds double-stranded RNAs (dsRNAs) with 5'-overhangs through its XS domain. Binds long non-coding RNA (lncRNA) in an AGO4-dependent manner and associates with DRM2, resulting in DNA methylation of RdDM target loci. Mediates the silencing of a subset of MORC6 target loci. In Arabidopsis thaliana (Mouse-ear cress), this protein is Protein INVOLVED IN DE NOVO 2.